Here is a 428-residue protein sequence, read N- to C-terminus: Phosphoribosylamine--glycine ligase (428 aa).

In terms of domain architecture, ATP-grasp spans 107-313; sequence KQVMKTYNIP…LVNVIESLLD (207 aa). 133 to 194 contacts ATP; the sequence is VEAEGVPIVI…EEYLEGEELS (62 aa). Positions 283 and 285 each coordinate Mg(2+).

This sequence belongs to the GARS family. It depends on Mg(2+) as a cofactor. Mn(2+) is required as a cofactor.

The catalysed reaction is 5-phospho-beta-D-ribosylamine + glycine + ATP = N(1)-(5-phospho-beta-D-ribosyl)glycinamide + ADP + phosphate + H(+). It participates in purine metabolism; IMP biosynthesis via de novo pathway; N(1)-(5-phospho-D-ribosyl)glycinamide from 5-phospho-alpha-D-ribose 1-diphosphate: step 2/2. The polypeptide is Phosphoribosylamine--glycine ligase (Halalkalibacterium halodurans (strain ATCC BAA-125 / DSM 18197 / FERM 7344 / JCM 9153 / C-125) (Bacillus halodurans)).